A 179-amino-acid polypeptide reads, in one-letter code: Ribosomal-protein-serine acetyltransferase (179 aa).

The 162-residue stretch at Leu11–Tyr172 folds into the N-acetyltransferase domain.

The protein belongs to the acetyltransferase family. RimL subfamily.

The protein resides in the cytoplasm. It catalyses the reaction N-terminal L-seryl-[ribosomal protein bL12] + acetyl-CoA = N-terminal N(alpha)-acetyl-L-seryl-[ribosomal protein bL12] + CoA + H(+). This enzyme acetylates the N-terminal serine of ribosomal protein bL12, converting it into the acetylated form of bL12 known as bL7. This Escherichia coli (strain K12) protein is Ribosomal-protein-serine acetyltransferase.